A 286-amino-acid polypeptide reads, in one-letter code: Phosphatidylserine decarboxylase proenzyme (286 aa).

Catalysis depends on charge relay system; for autoendoproteolytic cleavage activity residues Asp90, His147, and Ser252. Residue Ser252 is the Schiff-base intermediate with substrate; via pyruvic acid; for decarboxylase activity of the active site. A Pyruvic acid (Ser); by autocatalysis modification is found at Ser252.

The protein belongs to the phosphatidylserine decarboxylase family. PSD-B subfamily. Prokaryotic type I sub-subfamily. In terms of assembly, heterodimer of a large membrane-associated beta subunit and a small pyruvoyl-containing alpha subunit. Requires pyruvate as cofactor. Is synthesized initially as an inactive proenzyme. Formation of the active enzyme involves a self-maturation process in which the active site pyruvoyl group is generated from an internal serine residue via an autocatalytic post-translational modification. Two non-identical subunits are generated from the proenzyme in this reaction, and the pyruvate is formed at the N-terminus of the alpha chain, which is derived from the carboxyl end of the proenzyme. The autoendoproteolytic cleavage occurs by a canonical serine protease mechanism, in which the side chain hydroxyl group of the serine supplies its oxygen atom to form the C-terminus of the beta chain, while the remainder of the serine residue undergoes an oxidative deamination to produce ammonia and the pyruvoyl prosthetic group on the alpha chain. During this reaction, the Ser that is part of the protease active site of the proenzyme becomes the pyruvoyl prosthetic group, which constitutes an essential element of the active site of the mature decarboxylase.

The protein localises to the cell membrane. It catalyses the reaction a 1,2-diacyl-sn-glycero-3-phospho-L-serine + H(+) = a 1,2-diacyl-sn-glycero-3-phosphoethanolamine + CO2. It functions in the pathway phospholipid metabolism; phosphatidylethanolamine biosynthesis; phosphatidylethanolamine from CDP-diacylglycerol: step 2/2. Its function is as follows. Catalyzes the formation of phosphatidylethanolamine (PtdEtn) from phosphatidylserine (PtdSer). The polypeptide is Phosphatidylserine decarboxylase proenzyme (Ectopseudomonas mendocina (strain ymp) (Pseudomonas mendocina)).